Consider the following 345-residue polypeptide: Phenylalanine--tRNA ligase alpha subunit (345 aa).

Glutamate 272 serves as a coordination point for Mg(2+).

It belongs to the class-II aminoacyl-tRNA synthetase family. Phe-tRNA synthetase alpha subunit type 1 subfamily. Tetramer of two alpha and two beta subunits. Mg(2+) serves as cofactor.

It localises to the cytoplasm. It carries out the reaction tRNA(Phe) + L-phenylalanine + ATP = L-phenylalanyl-tRNA(Phe) + AMP + diphosphate + H(+). This Prochlorococcus marinus (strain MIT 9312) protein is Phenylalanine--tRNA ligase alpha subunit.